A 518-amino-acid polypeptide reads, in one-letter code: Equilibrative nucleoside transporter 4 (518 aa).

Over residues 1–10 (MGSKGAERRK) the composition is skewed to basic and acidic residues. Residues 1–21 (MGSKGAERRKQATPGQTPEGN) form a disordered region. Topologically, residues 1–66 (MGSKGAERRK…EEAVPDDRYH (66 aa)) are extracellular. A helical transmembrane segment spans residues 67–87 (GIYFAMLLAGVGFLLPYNSFI). Residues 88 to 99 (TDVDYLHHKFEG) lie on the Cytoplasmic side of the membrane. A helical membrane pass occupies residues 100–120 (TSIVFDMGLTYILVALVAVIL). The Extracellular segment spans residues 121–133 (NNVLVEMLSLHTR). Residues 134 to 154 (ITVGYLFALGPLLFVTIFDVW) form a helical membrane-spanning segment. The Cytoplasmic segment spans residues 155–157 (LER). The chain crosses the membrane as a helical span at residues 158–178 (FTIKQAYVINLMSMGTVAFGC). Residues 179–198 (TVQQSSFYGYMGMLPKRYTQ) lie on the Extracellular side of the membrane. The helical transmembrane segment at 199-218 (GVMTGESTAGVIISLSRIFT) threads the bilayer. Over 219–229 (KLLIKDERKNT) the chain is Cytoplasmic. The helical transmembrane segment at 230 to 250 (IIFFVISICMVLVCFILHLLV) threads the bilayer. Residues 251–342 (RRTRFVQYYT…MILHRYVVAR (92 aa)) are Extracellular-facing. The helical transmembrane segment at 343 to 363 (VIWTYMLSIAVTYFITLCLFP) threads the bilayer. The Cytoplasmic segment spans residues 364–376 (GLESEIKNATLGE). Residues 377–397 (WLPILIMAIFNISDFVGKILA) traverse the membrane as a helical segment. Residues 398-407 (AVPYEWNGTR) lie on the Extracellular side of the membrane. Residues 408-428 (LLFFSCVRVVFIPLFIMCVYP) form a helical membrane-spanning segment. Residues 429-439 (AQMPMFSHPAW) lie on the Cytoplasmic side of the membrane. The helical transmembrane segment at 440 to 460 (PCIFSLFMGITNGYFGSVPMI) threads the bilayer. Residues 461–476 (HAAGKVAPEQRELAGN) are Extracellular-facing. Residues 477 to 497 (IMTVSYMSGLMLGSVVAYAAY) traverse the membrane as a helical segment. Residues 498 to 518 (SFTASGSSFHSQTGYNFTQGY) are Cytoplasmic-facing.

This sequence belongs to the SLC29A/ENT transporter (TC 2.A.57) family.

Its subcellular location is the membrane. Functions as a polyspecific organic cation transporter, efficiently transporting many organic cations such as monoamine neurotransmitters 1-methyl-4-phenylpyridinium and biogenic amines including serotonin, dopamine, norepinephrine and epinephrine. May play a role in regulating central nervous system homeostasis of monoamine neurotransmitters. May be involved in luminal transport of organic cations in the kidney and seems to use luminal proton gradient to drive organic cation reabsorption. Does not seem to transport nucleoside and nucleoside analogs such as uridine, cytidine, thymidine, adenosine, inosine, guanosine, and azidothymidine. The polypeptide is Equilibrative nucleoside transporter 4 (slc29a4) (Danio rerio (Zebrafish)).